The primary structure comprises 459 residues: Ribulose bisphosphate carboxylase large chain (459 aa).

A propeptide spanning residues 1–2 (MS) is cleaved from the precursor. Pro-3 is subject to N-acetylproline. Lys-14 carries the post-translational modification N6,N6,N6-trimethyllysine. 2 residues coordinate substrate: Asn-123 and Thr-173. Lys-175 serves as the catalytic Proton acceptor. Lys-177 contributes to the substrate binding site. The Mg(2+) site is built by Lys-201, Asp-203, and Glu-204. The residue at position 201 (Lys-201) is an N6-carboxylysine. The active-site Proton acceptor is His-294. Substrate contacts are provided by Arg-295, His-327, and Ser-379.

It belongs to the RuBisCO large chain family. Type I subfamily. Heterohexadecamer of 8 large chains and 8 small chains; disulfide-linked. The disulfide link is formed within the large subunit homodimers. Mg(2+) is required as a cofactor. In terms of processing, the disulfide bond which can form in the large chain dimeric partners within the hexadecamer appears to be associated with oxidative stress and protein turnover.

It is found in the plastid. The protein resides in the chloroplast. It carries out the reaction 2 (2R)-3-phosphoglycerate + 2 H(+) = D-ribulose 1,5-bisphosphate + CO2 + H2O. The catalysed reaction is D-ribulose 1,5-bisphosphate + O2 = 2-phosphoglycolate + (2R)-3-phosphoglycerate + 2 H(+). Functionally, ruBisCO catalyzes two reactions: the carboxylation of D-ribulose 1,5-bisphosphate, the primary event in carbon dioxide fixation, as well as the oxidative fragmentation of the pentose substrate in the photorespiration process. Both reactions occur simultaneously and in competition at the same active site. The protein is Ribulose bisphosphate carboxylase large chain of Streptopus lanceolatus (Rose twisted stalk).